The sequence spans 360 residues: Probable neutral protease 2 homolog A (360 aa).

A signal peptide spans 1–17 (MQFTALLAALGAPLALA). Residues 18-183 (ASIPAAAHNH…DDSTGVIDKR (166 aa)) constitute a propeptide that is removed on maturation. Cystine bridges form between Cys-191–Cys-262, Cys-269–Cys-287, and Cys-300–Cys-360. Residue Asn-205 is glycosylated (N-linked (GlcNAc...) asparagine). His-311 contacts Zn(2+). Glu-312 is an active-site residue. Residues His-315 and Asp-326 each contribute to the Zn(2+) site.

Belongs to the peptidase M35 family. Zn(2+) serves as cofactor.

The protein localises to the secreted. The catalysed reaction is Preferential cleavage of bonds with hydrophobic residues in P1'. Also 3-Asn-|-Gln-4 and 8-Gly-|-Ser-9 bonds in insulin B chain.. Probable secreted metalloprotease that shows high activities on basic nuclear substrates such as histone and protamine. May be involved in virulence. The sequence is that of Probable neutral protease 2 homolog A (NpII-A) from Trichophyton rubrum (Athlete's foot fungus).